A 56-amino-acid chain; its full sequence is Large ribosomal subunit protein bL32 (56 aa).

The segment at 1–37 (MAVQQNKKSRSRRDMRRSHDALTTAAISVDKASGEKH) is disordered. The span at 7 to 16 (KKSRSRRDMR) shows a compositional bias: basic residues.

This sequence belongs to the bacterial ribosomal protein bL32 family.

This Pasteurella multocida (strain Pm70) protein is Large ribosomal subunit protein bL32 (rpmF).